The chain runs to 412 residues: Serine hydroxymethyltransferase (412 aa).

Residues Leu117 and 121–123 contribute to the (6S)-5,6,7,8-tetrahydrofolate site; that span reads GHL. Lys226 is subject to N6-(pyridoxal phosphate)lysine.

Belongs to the SHMT family. In terms of assembly, homodimer. The cofactor is pyridoxal 5'-phosphate.

The protein resides in the cytoplasm. The enzyme catalyses (6R)-5,10-methylene-5,6,7,8-tetrahydrofolate + glycine + H2O = (6S)-5,6,7,8-tetrahydrofolate + L-serine. The protein operates within one-carbon metabolism; tetrahydrofolate interconversion. It participates in amino-acid biosynthesis; glycine biosynthesis; glycine from L-serine: step 1/1. In terms of biological role, catalyzes the reversible interconversion of serine and glycine with tetrahydrofolate (THF) serving as the one-carbon carrier. This reaction serves as the major source of one-carbon groups required for the biosynthesis of purines, thymidylate, methionine, and other important biomolecules. Also exhibits THF-independent aldolase activity toward beta-hydroxyamino acids, producing glycine and aldehydes, via a retro-aldol mechanism. This is Serine hydroxymethyltransferase from Staphylococcus saprophyticus subsp. saprophyticus (strain ATCC 15305 / DSM 20229 / NCIMB 8711 / NCTC 7292 / S-41).